We begin with the raw amino-acid sequence, 138 residues long: ATP synthase epsilon chain (138 aa).

Belongs to the ATPase epsilon chain family. F-type ATPases have 2 components, CF(1) - the catalytic core - and CF(0) - the membrane proton channel. CF(1) has five subunits: alpha(3), beta(3), gamma(1), delta(1), epsilon(1). CF(0) has three main subunits: a, b and c.

It is found in the cell inner membrane. Its function is as follows. Produces ATP from ADP in the presence of a proton gradient across the membrane. The sequence is that of ATP synthase epsilon chain from Cupriavidus necator (strain ATCC 17699 / DSM 428 / KCTC 22496 / NCIMB 10442 / H16 / Stanier 337) (Ralstonia eutropha).